A 434-amino-acid polypeptide reads, in one-letter code: Eukaryotic translation initiation factor 3 subunit E-1 (434 aa).

In terms of domain architecture, PCI spans 219–392; the sequence is FFNHPKGRDL…GHVVMGTQPL (174 aa).

It belongs to the eIF-3 subunit E family. Component of the eukaryotic translation initiation factor 3 (eIF-3) complex. The eIF-3 complex interacts with pix. Interacts with mxt.

The protein resides in the cytoplasm. Functionally, component of the eukaryotic translation initiation factor 3 (eIF-3) complex, which is involved in protein synthesis of a specialized repertoire of mRNAs and, together with other initiation factors, stimulates binding of mRNA and methionyl-tRNAi to the 40S ribosome. The eIF-3 complex specifically targets and initiates translation of a subset of mRNAs involved in cell proliferation. The protein is Eukaryotic translation initiation factor 3 subunit E-1 (eIF3-S6-1) of Drosophila willistoni (Fruit fly).